A 202-amino-acid chain; its full sequence is Urease accessory protein UreE (202 aa).

Over residues 171 to 188 (HHGHSHSHDHDHDHDHQH) the composition is skewed to basic and acidic residues. The disordered stretch occupies residues 171–202 (HHGHSHSHDHDHDHDHQHGPGCTHGHRGHDHH).

The protein belongs to the UreE family.

It is found in the cytoplasm. In terms of biological role, involved in urease metallocenter assembly. Binds nickel. Probably functions as a nickel donor during metallocenter assembly. The protein is Urease accessory protein UreE of Burkholderia ambifaria (strain ATCC BAA-244 / DSM 16087 / CCUG 44356 / LMG 19182 / AMMD) (Burkholderia cepacia (strain AMMD)).